A 199-amino-acid polypeptide reads, in one-letter code: dTTP/UTP pyrophosphatase (199 aa).

Catalysis depends on Asp-73, which acts as the Proton acceptor.

This sequence belongs to the Maf family. YhdE subfamily. A divalent metal cation is required as a cofactor.

The protein resides in the cytoplasm. The enzyme catalyses dTTP + H2O = dTMP + diphosphate + H(+). It catalyses the reaction UTP + H2O = UMP + diphosphate + H(+). In terms of biological role, nucleoside triphosphate pyrophosphatase that hydrolyzes dTTP and UTP. May have a dual role in cell division arrest and in preventing the incorporation of modified nucleotides into cellular nucleic acids. This chain is dTTP/UTP pyrophosphatase, found in Caldicellulosiruptor saccharolyticus (strain ATCC 43494 / DSM 8903 / Tp8T 6331).